A 245-amino-acid chain; its full sequence is 2,3-bisphosphoglycerate-dependent phosphoglycerate mutase (245 aa).

Substrate-binding positions include 8–15, 21–22, arginine 60, 87–90, lysine 98, 114–115, and 183–184; these read RHGQSLWN, TG, ERHY, RR, and GN. The Tele-phosphohistidine intermediate role is filled by histidine 9. The active-site Proton donor/acceptor is glutamate 87.

The protein belongs to the phosphoglycerate mutase family. BPG-dependent PGAM subfamily.

It catalyses the reaction (2R)-2-phosphoglycerate = (2R)-3-phosphoglycerate. Its pathway is carbohydrate degradation; glycolysis; pyruvate from D-glyceraldehyde 3-phosphate: step 3/5. Its function is as follows. Catalyzes the interconversion of 2-phosphoglycerate and 3-phosphoglycerate. The chain is 2,3-bisphosphoglycerate-dependent phosphoglycerate mutase from Bacillus cereus (strain AH187).